Reading from the N-terminus, the 262-residue chain is Hydroxyethylthiazole kinase (262 aa).

A substrate-binding site is contributed by Met-43. ATP is bound by residues Arg-118 and Thr-164. Ala-191 contributes to the substrate binding site.

It belongs to the Thz kinase family. Mg(2+) serves as cofactor.

The catalysed reaction is 5-(2-hydroxyethyl)-4-methylthiazole + ATP = 4-methyl-5-(2-phosphooxyethyl)-thiazole + ADP + H(+). It participates in cofactor biosynthesis; thiamine diphosphate biosynthesis; 4-methyl-5-(2-phosphoethyl)-thiazole from 5-(2-hydroxyethyl)-4-methylthiazole: step 1/1. Functionally, catalyzes the phosphorylation of the hydroxyl group of 4-methyl-5-beta-hydroxyethylthiazole (THZ). This is Hydroxyethylthiazole kinase from Cereibacter sphaeroides (strain ATCC 17023 / DSM 158 / JCM 6121 / CCUG 31486 / LMG 2827 / NBRC 12203 / NCIMB 8253 / ATH 2.4.1.) (Rhodobacter sphaeroides).